A 232-amino-acid chain; its full sequence is Rho-related GTP-binding protein Rho6 (232 aa).

GTP contacts are provided by residues 23–28 (QCGKTA), 38–45 (YPETYVPT), 67–71 (DTSGS), 125–128 (CKTD), and 169–170 (AF). An Effector region motif is present at residues 42–50 (YVPTVFENY). Residue C229 is modified to Cysteine methyl ester. C229 is lipidated: S-geranylgeranyl cysteine. A propeptide spans 230-232 (SIM) (removed in mature form).

Belongs to the small GTPase superfamily. Rho family. In terms of assembly, binds GRB7 and PLXNB1. Interacts with UBXD5. Interacts with PLXNA2. Mostly expressed in brain and liver.

It localises to the cell membrane. The protein localises to the cytoplasm. It is found in the cytoskeleton. Lacks intrinsic GTPase activity. Has a low affinity for GDP, and constitutively binds GTP. Controls rearrangements of the actin cytoskeleton. Induces the Rac-dependent neuritic process formation in part by disruption of the cortical actin filaments. Causes the formation of many neuritic processes from the cell body with disruption of the cortical actin filaments. The chain is Rho-related GTP-binding protein Rho6 (RND1) from Homo sapiens (Human).